The chain runs to 316 residues: Ribosomal RNA small subunit methyltransferase H (316 aa).

S-adenosyl-L-methionine-binding positions include 35 to 37 (GGH), Asp-55, Phe-79, Asp-101, and Gln-108.

The protein belongs to the methyltransferase superfamily. RsmH family.

The protein localises to the cytoplasm. It catalyses the reaction cytidine(1402) in 16S rRNA + S-adenosyl-L-methionine = N(4)-methylcytidine(1402) in 16S rRNA + S-adenosyl-L-homocysteine + H(+). In terms of biological role, specifically methylates the N4 position of cytidine in position 1402 (C1402) of 16S rRNA. The polypeptide is Ribosomal RNA small subunit methyltransferase H (Aliivibrio fischeri (strain MJ11) (Vibrio fischeri)).